Here is a 164-residue protein sequence, read N- to C-terminus: uncharacterized protein (164 aa).

Residues 1–18 (MILILTIIVGFLIYFVTA) form the signal peptide. Asparagine 88 carries an N-linked (GlcNAc...) asparagine; by host glycan.

Belongs to the IIV-6 357R family.

This is an uncharacterized protein from Acheta domesticus (House cricket).